The following is a 288-amino-acid chain: Serine/threonine-protein acetyltransferase YopJ (288 aa).

Residues histidine 109 and glutamate 128 contribute to the active site. Histidine 109 is a CoA binding site. 167 to 168 (RS) contributes to the CoA binding site. Residue cysteine 172 is part of the active site. 1D-myo-inositol hexakisphosphate contacts are provided by residues 182–185 (KLYI) and 224–225 (KH). Residue 227 to 230 (QGKK) participates in CoA binding. Arginine 257 serves as a coordination point for 1D-myo-inositol hexakisphosphate. 266 to 270 (DGKEL) is a CoA binding site.

This sequence belongs to the acetyltransferase YopJ family. 1D-myo-inositol hexakisphosphate serves as cofactor.

It localises to the secreted. It catalyses the reaction L-threonyl-[protein] + acetyl-CoA = O-acetyl-L-threonyl-[protein] + CoA. It carries out the reaction L-seryl-[protein] + acetyl-CoA = O-acetyl-L-seryl-[protein] + CoA. With respect to regulation, 1D-myo-inositol hexakisphosphate activates protein-acetyltransferase activity via an allosteric mechanism: 1D-myo-inositol hexakisphosphate-binding induces a conformational rearrangement that stimulates the interaction with acetyl-CoA. In terms of biological role, serine/threonine-protein acetyltransferase translocated into infected cells, which inhibits the host immune response and induces cell death by mediating acetylation of target proteins. Inhibits the MAPK and NF-kappa-B signaling pathways by acetylating protein-kinases such as MAP2K1, MAP2K6, MAP3K7/TAK1 and I-kappa-B kinase (CHUK/IKKA and IKBKB) on serine and threonine residues critical for their activation by phosphorylation, thereby preventing protein-kinase activation. Promotes pyroptosis, a programmed cell death, in host cells by mediating acetylation of MAP3K7/TAK1: MAP3K7/TAK1 inactivation triggers activation of caspase-8 (CASP8), followed by CASP8-dependent cleavage of gasdermin-D (GSDMD) and induction of pyroptosis. The chain is Serine/threonine-protein acetyltransferase YopJ from Yersinia pestis.